A 376-amino-acid polypeptide reads, in one-letter code: MSKRDYYEVLGVGRDASEREIKKAYKRLAMKFHPDRNPGDKAAEASFKEVKEAYEILTDSDKKAAYDQFGHAGVDPNRGGGGFGGGADFGDVFGDVFGDIFGGGRRGGQRQAARGSDLRYNLELSLEEAVRGLTKELRIPTLATCDLCDGSGAKKGSSPTTCGTCHGQGQVQMRQGFFAVQQACPTCHGRGKIIKDPCGKCHGEGRVEKSKTLSVKIPAGVDTGDRIRLSGEGEAGEFGAPPGDLYVQVTVREHAIFVRDGNNLYCEVPISFSTAALGGEIEVPTLDGKVNLKIPSETQTGRMFRLRGKGVKSVRSHAVGDLLCKVVMETPVNLNDKQKELLREFDNTLTGSSKKHSPKAEGFFDGVKKFFQDLNS.

Positions 5 to 70 (DYYEVLGVGR…DKKAAYDQFG (66 aa)) constitute a J domain. The segment at 132 to 210 (GLTKELRIPT…CHGEGRVEKS (79 aa)) adopts a CR-type zinc-finger fold. Zn(2+)-binding residues include C145, C148, C162, C165, C184, C187, C198, and C201. CXXCXGXG motif repeat units follow at residues 145–152 (CDLCDGSG), 162–169 (CGTCHGQG), 184–191 (CPTCHGRG), and 198–205 (CGKCHGEG).

The protein belongs to the DnaJ family. In terms of assembly, homodimer. Zn(2+) is required as a cofactor.

The protein localises to the cytoplasm. In terms of biological role, participates actively in the response to hyperosmotic and heat shock by preventing the aggregation of stress-denatured proteins and by disaggregating proteins, also in an autonomous, DnaK-independent fashion. Unfolded proteins bind initially to DnaJ; upon interaction with the DnaJ-bound protein, DnaK hydrolyzes its bound ATP, resulting in the formation of a stable complex. GrpE releases ADP from DnaK; ATP binding to DnaK triggers the release of the substrate protein, thus completing the reaction cycle. Several rounds of ATP-dependent interactions between DnaJ, DnaK and GrpE are required for fully efficient folding. Also involved, together with DnaK and GrpE, in the DNA replication of plasmids through activation of initiation proteins. The sequence is that of Chaperone protein DnaJ from Shewanella loihica (strain ATCC BAA-1088 / PV-4).